A 126-amino-acid chain; its full sequence is Large ribosomal subunit protein bL12 (126 aa).

This sequence belongs to the bacterial ribosomal protein bL12 family. In terms of assembly, homodimer. Part of the ribosomal stalk of the 50S ribosomal subunit. Forms a multimeric L10(L12)X complex, where L10 forms an elongated spine to which 2 to 4 L12 dimers bind in a sequential fashion. Binds GTP-bound translation factors.

Functionally, forms part of the ribosomal stalk which helps the ribosome interact with GTP-bound translation factors. Is thus essential for accurate translation. This is Large ribosomal subunit protein bL12 from Bifidobacterium longum subsp. infantis (strain ATCC 15697 / DSM 20088 / JCM 1222 / NCTC 11817 / S12).